We begin with the raw amino-acid sequence, 389 residues long: Phospho-N-acetylmuramoyl-pentapeptide-transferase (389 aa).

The next 10 helical transmembrane spans lie at 25–45 (RAVMATITALLIGLVCGPAVI), 73–93 (TMGGVLILLGIAVATLLWADL), 97–117 (FIWIVMLVTFGFGVIGWVDDY), 135–155 (FWQSVIGLFAAVYLAFSVSEA), 190–210 (ISYPLGVWGFIVLTYLVIVGA), 222–242 (GLVIMPVVLVGASLGVFAYVM), 259–279 (AGELLIFCSAMGGAGLAFLWF), 287–307 (FMGDVGALALGGALGTVAVIV), 311–331 (IVLFIMGGIFVAETLSVMLQV), and 366–386 (QVVVRFWIITLMLCLFGLSTL).

This sequence belongs to the glycosyltransferase 4 family. MraY subfamily. The cofactor is Mg(2+).

It is found in the cell inner membrane. The enzyme catalyses UDP-N-acetyl-alpha-D-muramoyl-L-alanyl-gamma-D-glutamyl-meso-2,6-diaminopimeloyl-D-alanyl-D-alanine + di-trans,octa-cis-undecaprenyl phosphate = di-trans,octa-cis-undecaprenyl diphospho-N-acetyl-alpha-D-muramoyl-L-alanyl-D-glutamyl-meso-2,6-diaminopimeloyl-D-alanyl-D-alanine + UMP. It participates in cell wall biogenesis; peptidoglycan biosynthesis. Catalyzes the initial step of the lipid cycle reactions in the biosynthesis of the cell wall peptidoglycan: transfers peptidoglycan precursor phospho-MurNAc-pentapeptide from UDP-MurNAc-pentapeptide onto the lipid carrier undecaprenyl phosphate, yielding undecaprenyl-pyrophosphoryl-MurNAc-pentapeptide, known as lipid I. The polypeptide is Phospho-N-acetylmuramoyl-pentapeptide-transferase (Paraburkholderia phytofirmans (strain DSM 17436 / LMG 22146 / PsJN) (Burkholderia phytofirmans)).